The sequence spans 912 residues: Phosphoenolpyruvate carboxylase (912 aa).

Catalysis depends on residues histidine 138 and lysine 575.

Belongs to the PEPCase type 1 family. Mg(2+) serves as cofactor.

The enzyme catalyses oxaloacetate + phosphate = phosphoenolpyruvate + hydrogencarbonate. In terms of biological role, forms oxaloacetate, a four-carbon dicarboxylic acid source for the tricarboxylic acid cycle. The polypeptide is Phosphoenolpyruvate carboxylase (Lactobacillus helveticus (strain DPC 4571)).